The following is a 293-amino-acid chain: Glycine--tRNA ligase alpha subunit (293 aa).

This sequence belongs to the class-II aminoacyl-tRNA synthetase family. In terms of assembly, tetramer of two alpha and two beta subunits.

It localises to the cytoplasm. The enzyme catalyses tRNA(Gly) + glycine + ATP = glycyl-tRNA(Gly) + AMP + diphosphate. The polypeptide is Glycine--tRNA ligase alpha subunit (Oceanobacillus iheyensis (strain DSM 14371 / CIP 107618 / JCM 11309 / KCTC 3954 / HTE831)).